The following is a 373-amino-acid chain: Putative ribosome biogenesis protein C8F11.04 (373 aa).

The interval 265–373 is disordered; sequence RKVVTKETAS…VKAGKNKVKH (109 aa). Over residues 292–320 the composition is skewed to basic and acidic residues; sequence KVEVAKESKDSKQQNVSDKKQVTVKEVPK. Residues 347-359 show a composition bias toward polar residues; that stretch reads KVSQSSLKANGTT. Residues 362-373 show a composition bias toward basic residues; that stretch reads KKVKAGKNKVKH.

It belongs to the universal ribosomal protein uL1 family. Highly divergent. Component of the 90S pre-ribosomes.

It localises to the nucleus. It is found in the nucleolus. In terms of biological role, involved in rRNA-processing and ribosome biosynthesis. The protein is Putative ribosome biogenesis protein C8F11.04 of Schizosaccharomyces pombe (strain 972 / ATCC 24843) (Fission yeast).